We begin with the raw amino-acid sequence, 106 residues long: Large ribosomal subunit protein bL21 (106 aa).

This sequence belongs to the bacterial ribosomal protein bL21 family. As to quaternary structure, part of the 50S ribosomal subunit. Contacts protein L20.

Its function is as follows. This protein binds to 23S rRNA in the presence of protein L20. In Chlamydia pneumoniae (Chlamydophila pneumoniae), this protein is Large ribosomal subunit protein bL21.